Here is a 931-residue protein sequence, read N- to C-terminus: Chitin synthase III (931 aa).

Residues Asn-37 and Asn-94 are each glycosylated (N-linked (GlcNAc...) asparagine). Positions 93–154 (PNASQLPPAG…PGGVGQAGGL (62 aa)) are disordered. A compositionally biased stretch (gly residues) spans 102–122 (GSGGFGDNGFGQYGQPQGFGG). Residue Asn-558 is glycosylated (N-linked (GlcNAc...) asparagine). Helical transmembrane passes span 585–605 (FFLH…WFSL), 644–664 (IINA…FILA), 677–697 (IASF…SGYL), 731–751 (VILI…FLYL), and 759–779 (SFPY…VYAF). The N-linked (GlcNAc...) asparagine glycan is linked to Asn-802. 2 consecutive transmembrane segments (helical) span residues 858-878 (TGLV…ITSD) and 899-919 (FLLY…LWFL).

It belongs to the chitin synthase family. Class III subfamily. In terms of tissue distribution, highly expressed in conidia and during appressorium formation.

It is found in the cell membrane. It carries out the reaction [(1-&gt;4)-N-acetyl-beta-D-glucosaminyl](n) + UDP-N-acetyl-alpha-D-glucosamine = [(1-&gt;4)-N-acetyl-beta-D-glucosaminyl](n+1) + UDP + H(+). Polymerizes chitin, a structural polymer of the cell wall and septum, by transferring the sugar moiety of UDP-GlcNAc to the non-reducing end of the growing chitin polymer. Contributes to the production of conidia and the ability of fungal conidia to germinate. Involved in the fungal cell wall integrity and the ability of conidia to withstand biophysical pressure. Required for appressorium formation and evasion of insect cellular and/or humoral defenses, promoting the fungal dimorphic transition to the production of hyphal bodies that occurs within hosts, and ultimately to virulence. The protein is Chitin synthase III of Metarhizium acridum (strain CQMa 102).